A 77-amino-acid polypeptide reads, in one-letter code: Sec-independent protein translocase protein TatA (77 aa).

The chain crosses the membrane as a helical span at residues glycine 2–phenylalanine 22. Composition is skewed to basic and acidic residues over residues aspartate 46–lysine 59 and glutamine 66–aspartate 77. The disordered stretch occupies residues aspartate 46–aspartate 77.

The protein belongs to the TatA/E family. As to quaternary structure, the Tat system comprises two distinct complexes: a TatABC complex, containing multiple copies of TatA, TatB and TatC subunits, and a separate TatA complex, containing only TatA subunits. Substrates initially bind to the TatABC complex, which probably triggers association of the separate TatA complex to form the active translocon.

Its subcellular location is the cell inner membrane. In terms of biological role, part of the twin-arginine translocation (Tat) system that transports large folded proteins containing a characteristic twin-arginine motif in their signal peptide across membranes. TatA could form the protein-conducting channel of the Tat system. This chain is Sec-independent protein translocase protein TatA, found in Ectopseudomonas mendocina (strain ymp) (Pseudomonas mendocina).